A 445-amino-acid polypeptide reads, in one-letter code: Putative transcription factor bHLH056 (445 aa).

3 disordered regions span residues 36–70 (NQTH…PPHL), 224–260 (QIQP…AEMH), and 365–445 (PFPN…QPTA). The segment covering 231–246 (SKLKAREETHGTEEAR) has biased composition (basic and acidic residues). The 50-residue stretch at 255 to 304 (RTAEMHNLAERRRREKINEKMKTLQQLIPRCNKSTKVSTLDDAIEYVKSL) folds into the bHLH domain. Low complexity predominate over residues 418-433 (QGQTTSQLSSGQASSS).

As to quaternary structure, homodimer.

It is found in the nucleus. The protein is Putative transcription factor bHLH056 (BHLH56) of Arabidopsis thaliana (Mouse-ear cress).